Reading from the N-terminus, the 378-residue chain is Alanine racemase (378 aa).

K40 serves as the catalytic Proton acceptor; specific for D-alanine. Position 40 is an N6-(pyridoxal phosphate)lysine (K40). R140 provides a ligand contact to substrate. Residue Y270 is the Proton acceptor; specific for L-alanine of the active site. M317 serves as a coordination point for substrate.

Belongs to the alanine racemase family. It depends on pyridoxal 5'-phosphate as a cofactor.

It carries out the reaction L-alanine = D-alanine. The protein operates within amino-acid biosynthesis; D-alanine biosynthesis; D-alanine from L-alanine: step 1/1. Catalyzes the interconversion of L-alanine and D-alanine. May also act on other amino acids. This is Alanine racemase (alr) from Lacticaseibacillus paracasei (strain ATCC 334 / BCRC 17002 / CCUG 31169 / CIP 107868 / KCTC 3260 / NRRL B-441) (Lactobacillus paracasei).